Consider the following 1161-residue polypeptide: DNA-directed RNA polymerase 132 kDa polypeptide (1161 aa).

It belongs to the RNA polymerase beta chain family. In terms of assembly, the DNA-dependent RNA polymerase used for intermediate and late genes expression consists of eight subunits (147) kDa, (133) kDa, (35) kDa, (30) kDa, (22) kDa, (19) kDa, (18) kDa and (7) kDa totalling more than 500 kDa in mass. The same holoenzyme, with the addition of the transcription-specificity factor RAP94, is used for early gene expression.

Its subcellular location is the virion. It carries out the reaction RNA(n) + a ribonucleoside 5'-triphosphate = RNA(n+1) + diphosphate. Functionally, part of the DNA-dependent RNA polymerase which catalyzes the transcription of viral DNA into RNA using the four ribonucleoside triphosphates as substrates. Responsible for the transcription of early, intermediate and late genes. DNA-dependent RNA polymerase associates with the early transcription factor (ETF), itself composed of D6 and A7, thereby allowing the early genes transcription. Late transcription, and probably also intermediate transcription, require newly synthesized RNA polymerase. This is DNA-directed RNA polymerase 132 kDa polypeptide (RPO132) from Fowlpox virus (strain NVSL) (FPV).